The sequence spans 301 residues: Vomeronasal type-1 receptor 4 (301 aa).

The Extracellular portion of the chain corresponds to 1–15 (MASRYVAVGMMLSQT). The helical transmembrane segment at 16-36 (VVGVLGSFSLLLHYLSLHYIG) threads the bilayer. At 37 to 48 (CRLRSADLIVKH) the chain is on the cytoplasmic side. A helical membrane pass occupies residues 49–69 (LIAASFLTLLCKGVPQTMAAF). Residues 70-88 (RVRYFLNAIGCKLVFYLHR) lie on the Extracellular side of the membrane. Residues 89 to 107 (VGRGVSTGTTCLLSVFQVI) traverse the membrane as a helical segment. Topologically, residues 108-126 (TVSSRKSRWAKLKEKAPKH) are cytoplasmic. The chain crosses the membrane as a helical span at residues 127–147 (VGFSVLLCWILCMLVNIIFPI). The Extracellular portion of the chain corresponds to 148-185 (YVTGKRNHTNITVNKDLGDCCGRGNNKIAQTLRAMLLS). Asn-154 and Asn-157 each carry an N-linked (GlcNAc...) asparagine glycan. The helical transmembrane segment at 186-206 (FPDVLCLGFMLWASSSMVCIL) threads the bilayer. Residues 207 to 234 (HRHKQRVQHIHRSNLSPRASPENRATQS) are Cytoplasmic-facing. The chain crosses the membrane as a helical span at residues 235–255 (ILIPVSTFVSSYTLSCLLQVC). The Extracellular segment spans residues 256–264 (MALLDNPNS). The chain crosses the membrane as a helical span at residues 265–285 (LLVNTSALMSACFPTLSPFVL). At 286–301 (MSCDPSVYRLCFAWKR) the chain is on the cytoplasmic side.

This sequence belongs to the G-protein coupled receptor 1 family.

The protein resides in the cell membrane. Functionally, putative pheromone receptor. The polypeptide is Vomeronasal type-1 receptor 4 (VN1R4) (Pongo pygmaeus (Bornean orangutan)).